A 152-amino-acid polypeptide reads, in one-letter code: Large ribosomal subunit protein uL15 (152 aa).

The segment at Met1–Val79 is disordered. Over residues Gly22–Gln35 the composition is skewed to gly residues.

This sequence belongs to the universal ribosomal protein uL15 family. As to quaternary structure, part of the 50S ribosomal subunit.

Binds to the 23S rRNA. The sequence is that of Large ribosomal subunit protein uL15 from Rubrobacter xylanophilus (strain DSM 9941 / JCM 11954 / NBRC 16129 / PRD-1).